A 660-amino-acid polypeptide reads, in one-letter code: UvrABC system protein B (660 aa).

A Helicase ATP-binding domain is found at 25–183 (EGLNKGLKHQ…ALINIHYERN (159 aa)). Residue 38–45 (GVTGSGKT) participates in ATP binding. Residues 91-114 (YYDYYQPEAYLPTTDTYIEKDSSV) carry the Beta-hairpin motif. The Helicase C-terminal domain occupies 431–593 (QIDDLIGEVN…IVPQTIHKAL (163 aa)). The region spanning 622–657 (ADMVIELEAEMHLAAKNLEFERAAALRDNIKELRST) is the UVR domain.

Belongs to the UvrB family. As to quaternary structure, forms a heterotetramer with UvrA during the search for lesions. Interacts with UvrC in an incision complex.

The protein localises to the cytoplasm. The UvrABC repair system catalyzes the recognition and processing of DNA lesions. A damage recognition complex composed of 2 UvrA and 2 UvrB subunits scans DNA for abnormalities. Upon binding of the UvrA(2)B(2) complex to a putative damaged site, the DNA wraps around one UvrB monomer. DNA wrap is dependent on ATP binding by UvrB and probably causes local melting of the DNA helix, facilitating insertion of UvrB beta-hairpin between the DNA strands. Then UvrB probes one DNA strand for the presence of a lesion. If a lesion is found the UvrA subunits dissociate and the UvrB-DNA preincision complex is formed. This complex is subsequently bound by UvrC and the second UvrB is released. If no lesion is found, the DNA wraps around the other UvrB subunit that will check the other stand for damage. The polypeptide is UvrABC system protein B (Methanococcoides burtonii (strain DSM 6242 / NBRC 107633 / OCM 468 / ACE-M)).